Consider the following 305-residue polypeptide: Oxygen-dependent coproporphyrinogen-III oxidase (305 aa).

Residue Ser-98 coordinates substrate. Residues His-102 and His-112 each coordinate a divalent metal cation. His-112 acts as the Proton donor in catalysis. Asn-114–Arg-116 contributes to the substrate binding site. A divalent metal cation is bound by residues His-151 and His-181. Residues Tyr-246–Glu-281 are important for dimerization. Position 264–266 (Gly-264–Arg-266) interacts with substrate.

The protein belongs to the aerobic coproporphyrinogen-III oxidase family. In terms of assembly, homodimer. The cofactor is a divalent metal cation.

The protein localises to the cytoplasm. The catalysed reaction is coproporphyrinogen III + O2 + 2 H(+) = protoporphyrinogen IX + 2 CO2 + 2 H2O. The protein operates within porphyrin-containing compound metabolism; protoporphyrin-IX biosynthesis; protoporphyrinogen-IX from coproporphyrinogen-III (O2 route): step 1/1. In terms of biological role, involved in the heme biosynthesis. Catalyzes the aerobic oxidative decarboxylation of propionate groups of rings A and B of coproporphyrinogen-III to yield the vinyl groups in protoporphyrinogen-IX. This Vibrio atlanticus (strain LGP32) (Vibrio splendidus (strain Mel32)) protein is Oxygen-dependent coproporphyrinogen-III oxidase.